The following is a 788-amino-acid chain: Calpastatin (788 aa).

A compositionally biased stretch (pro residues) spans 1–11; the sequence is MSQPGPKPAAS. Disordered stretches follow at residues 1 to 262, 289 to 493, and 514 to 580; these read MSQP…TGPV, LLEK…MCSI, and TLAG…SQEQ. Ser-11 is modified (phosphoserine). Residues 12-21 show a composition bias toward low complexity; that stretch reads PRPSRGAAAR. Positions 38-49 are enriched in basic and acidic residues; the sequence is PGEKKGSDEKKA. A compositionally biased stretch (low complexity) spans 65 to 87; the sequence is AATATKVTASSAATSKSPSMSTT. Basic and acidic residues predominate over residues 99-119; that stretch reads EGPDQKRPREQAVKTESKKPQ. Residue Lys-112 forms a Glycyl lysine isopeptide (Lys-Gly) (interchain with G-Cter in SUMO2) linkage. N6-acetyllysine is present on Lys-129. The residue at position 165 (Ser-165) is a Phosphoserine. Thr-216 bears the Phosphothreonine mark. At Ser-219 the chain carries Phosphoserine. The span at 246 to 256 shows a compositional bias: basic and acidic residues; that stretch reads GGHEDTNRDDP. An Inhibitory domain 1 repeat occupies 251–303; sequence TNRDDPPYTGPVVLDPMYSTYLEALGIKEGTIPPEYRKLLEKNEGITQPLPDS. Ser-303 and Ser-324 each carry phosphoserine. 2 stretches are compositionally biased toward polar residues: residues 318–328 and 369–380; these read SDFTCSSPTGK and QALQALSDSLGT. Residues 384 to 436 form an Inhibitory domain 2 repeat; the sequence is DPPSHVSQAEQVKEAKAKEERQEKCGEDEDTVPAEYRLKPAKDKDGKPLLPEP. Composition is skewed to basic and acidic residues over residues 394 to 408 and 419 to 430; these read QVKE…QEKC and YRLKPAKDKDGK. The span at 441–453 shows a compositional bias: low complexity; sequence KSLSESELIGELS. 3 positions are modified to phosphoserine: Ser-444, Ser-446, and Ser-453. Position 479 is a phosphothreonine (Thr-479). At Ser-518 the chain carries Phosphoserine. The span at 522 to 570 shows a compositional bias: basic and acidic residues; the sequence is READPEHEKTVEDKVKEKAKEEEHEKLGEKEETVPPDYRLEEVKDKDGK. Residues 524-577 form an Inhibitory domain 3 repeat; the sequence is ADPEHEKTVEDKVKEKAKEEEHEKLGEKEETVPPDYRLEEVKDKDGKPLLPKES. Ser-594, Ser-605, Ser-653, and Ser-655 each carry phosphoserine. The segment at 620–788 is disordered; that stretch reads VVSQTPAPST…PKAKEDARHS (169 aa). The Inhibitory domain 4 repeat unit spans residues 661 to 714; it reads PDPDENKPLDDKVKEKIKPEHSEKLGERDDTIPPEYRHLLDNDGKDKPEKPPTK. Composition is skewed to basic and acidic residues over residues 661–726 and 759–788; these read PDPD…RDPI and ASKD…ARHS.

Belongs to the protease inhibitor I27 (calpastatin) family. As to expression, isoform 2 is the major form in all tissues examined. Isoform 1 accounts for 5-10% in tissues such as skeletal muscle, liver and brain, and 30% in myoblasts. Isoforms 4 and 5 are testis-specific. Isoform 6 is highly expressed in heart and skeletal muscle with lower levels in liver, brain and testis. Isoform 7 is expressed at high levels in liver.

Its function is as follows. Specific inhibition of calpain (calcium-dependent cysteine protease). Plays a key role in postmortem tenderization of meat and have been proposed to be involved in muscle protein degradation in living tissue. This is Calpastatin (Cast) from Mus musculus (Mouse).